The chain runs to 161 residues: Cyclic pyranopterin monophosphate synthase (161 aa).

Substrate is bound by residues 73 to 75 and 110 to 111; these read LCH and ME. D125 is an active-site residue.

It belongs to the MoaC family. In terms of assembly, homohexamer; trimer of dimers.

The enzyme catalyses (8S)-3',8-cyclo-7,8-dihydroguanosine 5'-triphosphate = cyclic pyranopterin phosphate + diphosphate. It functions in the pathway cofactor biosynthesis; molybdopterin biosynthesis. Its function is as follows. Catalyzes the conversion of (8S)-3',8-cyclo-7,8-dihydroguanosine 5'-triphosphate to cyclic pyranopterin monophosphate (cPMP). The protein is Cyclic pyranopterin monophosphate synthase of Pseudomonas syringae pv. tomato (strain ATCC BAA-871 / DC3000).